A 208-amino-acid polypeptide reads, in one-letter code: Transmembrane protein 222 (208 aa).

A disordered region spans residues 1–34 (MAEAEGSSPLLLQPPPPPPRMAEVETPTGAETDM). Residues 1-55 (MAEAEGSSPLLLQPPPPPPRMAEVETPTGAETDMKQYHGSGGVVMDVERSRFPYC) are Extracellular-facing. The helical transmembrane segment at 56-76 (VVWTPIPVLTWFFPIIGHMGI) threads the bilayer. At 77 to 164 (CTSAGVIRDF…MRYNNSTNWN (88 aa)) the chain is on the cytoplasmic side. The chain crosses the membrane as a helical span at residues 165–185 (MVTLCCFCLIYGKYVSVGAFV). Position 186 (K186) is a topological domain, extracellular. The helical transmembrane segment at 187 to 207 (TWLPFVLLLGIILTVSLVFNL) threads the bilayer. Residue R208 is a topological domain, cytoplasmic.

The protein resides in the membrane. It localises to the cell projection. It is found in the dendrite. The protein is Transmembrane protein 222 (Tmem222) of Mus musculus (Mouse).